The chain runs to 253 residues: Prolactin-7A2 (253 aa).

Positions 1-30 (MSFSFSQPCPSGALLLVVVSSLLLWENVAS) are cleaved as a signal peptide. N-linked (GlcNAc...) asparagine glycosylation is found at Asn36, Asn103, and Asn135. Cystine bridges form between Cys101–Cys218 and Cys235–Cys244.

Belongs to the somatotropin/prolactin family. Expression restricted to the placental tissue. Expressed only in the spongiotrophoblasts.

The protein localises to the secreted. The sequence is that of Prolactin-7A2 (Prl7a2) from Mus musculus (Mouse).